Here is a 552-residue protein sequence, read N- to C-terminus: Eukaryotic translation initiation factor 3 subunit D (552 aa).

The segment at Asp288 to Pro302 is RNA gate. A disordered region spans residues Leu525–Asn552. A compositionally biased stretch (acidic residues) spans Ser532 to Asn552.

It belongs to the eIF-3 subunit D family. Component of the eukaryotic translation initiation factor 3 (eIF-3) complex, which is composed of 13 subunits: eif3a, eif3b, eif3c, eif3d, eif3e, eif3f, eif3g, eif3h, eif3i, eif3j, eif3k, eif3l and eif3m.

The protein resides in the cytoplasm. Its function is as follows. mRNA cap-binding component of the eukaryotic translation initiation factor 3 (eIF-3) complex, which is involved in protein synthesis of a specialized repertoire of mRNAs and, together with other initiation factors, stimulates binding of mRNA and methionyl-tRNAi to the 40S ribosome. The eIF-3 complex specifically targets and initiates translation of a subset of mRNAs involved in cell proliferation. In the eIF-3 complex, eif3d specifically recognizes and binds the 7-methylguanosine cap of a subset of mRNAs. The protein is Eukaryotic translation initiation factor 3 subunit D (eif3d) of Danio rerio (Zebrafish).